The chain runs to 872 residues: Protein translocase subunit SecA (872 aa).

ATP is bound by residues glutamine 87, 105-109, and aspartate 500; that span reads GEGKT. Zn(2+)-binding residues include cysteine 855, cysteine 857, cysteine 866, and histidine 867.

Belongs to the SecA family. In terms of assembly, monomer and homodimer. Part of the essential Sec protein translocation apparatus which comprises SecA, SecYEG and auxiliary proteins SecDF-YajC and YidC. The cofactor is Zn(2+).

The protein localises to the cell inner membrane. It is found in the cytoplasm. It catalyses the reaction ATP + H2O + cellular proteinSide 1 = ADP + phosphate + cellular proteinSide 2.. Functionally, part of the Sec protein translocase complex. Interacts with the SecYEG preprotein conducting channel. Has a central role in coupling the hydrolysis of ATP to the transfer of proteins into and across the cell membrane, serving both as a receptor for the preprotein-SecB complex and as an ATP-driven molecular motor driving the stepwise translocation of polypeptide chains across the membrane. The protein is Protein translocase subunit SecA of Anaplasma marginale (strain St. Maries).